Reading from the N-terminus, the 479-residue chain is Ribulose bisphosphate carboxylase large chain (479 aa).

Residues 1 to 2 (MS) constitute a propeptide that is removed on maturation. Residues Asn-123 and Thr-173 each contribute to the substrate site. Catalysis depends on Lys-175, which acts as the Proton acceptor. Residue Lys-177 participates in substrate binding. Mg(2+) contacts are provided by Lys-201, Asp-203, and Glu-204. Lys-201 carries the N6-carboxylysine modification. A Phosphoserine modification is found at Ser-208. Catalysis depends on His-294, which acts as the Proton acceptor. Substrate contacts are provided by Arg-295 and His-327. Thr-330 carries the phosphothreonine modification. Position 379 (Ser-379) interacts with substrate.

It belongs to the RuBisCO large chain family. Type I subfamily. Heterohexadecamer of 8 large chains and 8 small chains; disulfide-linked. The disulfide link is formed within the large subunit homodimers. Mg(2+) is required as a cofactor. Post-translationally, the disulfide bond which can form in the large chain dimeric partners within the hexadecamer appears to be associated with oxidative stress and protein turnover.

The protein localises to the plastid. Its subcellular location is the chloroplast. It catalyses the reaction 2 (2R)-3-phosphoglycerate + 2 H(+) = D-ribulose 1,5-bisphosphate + CO2 + H2O. The catalysed reaction is D-ribulose 1,5-bisphosphate + O2 = 2-phosphoglycolate + (2R)-3-phosphoglycerate + 2 H(+). Its function is as follows. RuBisCO catalyzes two reactions: the carboxylation of D-ribulose 1,5-bisphosphate, the primary event in carbon dioxide fixation, as well as the oxidative fragmentation of the pentose substrate in the photorespiration process. Both reactions occur simultaneously and in competition at the same active site. In Draba nemorosa (Woodland whitlowgrass), this protein is Ribulose bisphosphate carboxylase large chain.